The primary structure comprises 1246 residues: HMG2-induced ER-remodeling protein 1 (1246 aa).

Disordered regions lie at residues 19 to 241 (KGKR…GSLT), 263 to 288 (HHIQ…LPPI), and 816 to 836 (MPDA…KDEK). A compositionally biased stretch (low complexity) spans 27–41 (KSAASTRTSEATTTS). The span at 58 to 95 (TIASPQRPLSGQNVNNELSNSKPAVSAEKVSQQGQVPT) shows a compositional bias: polar residues. Ser-102 is subject to Phosphoserine. Position 128 is a phosphothreonine (Thr-128). Low complexity-rich tracts occupy residues 154–163 (RSSSISTSLN) and 211–230 (SKIS…PSSS). Positions 271–282 (SGREQDSPHSES) are enriched in basic and acidic residues. A Phosphoserine modification is found at Ser-277. Residue Ser-1013 is modified to Phosphoserine. Composition is skewed to polar residues over residues 1109–1133 (SSRH…TPDS) and 1200–1215 (SRSP…QQKA). Disordered regions lie at residues 1109–1157 (SSRH…LPKI) and 1192–1224 (SLYG…LVED). Position 1130 is a phosphothreonine (Thr-1130). Residues Ser-1200, Ser-1204, and Ser-1207 each carry the phosphoserine modification.

It belongs to the GIP3/HER1 family. May interact with ribosomes.

It is found in the cytoplasm. Functionally, required for HMG2-induced endoplasmic reticulum-remodeling. The protein is HMG2-induced ER-remodeling protein 1 (HER1) of Saccharomyces cerevisiae (strain ATCC 204508 / S288c) (Baker's yeast).